The following is a 435-amino-acid chain: Solute carrier family 38 member 8 (435 aa).

Transmembrane regions (helical) follow at residues 29 to 49 (AVFI…PWAF), 55 to 75 (VVPA…GLVI), 100 to 120 (IGKL…VAFL), 151 to 171 (FTLP…REIA), 178 to 198 (ILGT…YYLW), 218 to 240 (VFSV…SIYC), 250 to 270 (WALV…LTGV), 295 to 315 (IIVA…IVLF), 348 to 368 (MPLT…MPDL), 374 to 394 (IIGG…LICA), and 410 to 430 (VWGV…TAAA).

Belongs to the amino acid/polyamine transporter 2 family. Expressed in fetal and adult brain, and spinal cord. In the brain, it is localized in the cell body and axon of the majority of neuronal cells and in a subset of glial cells. Found throughout the neuronal retina, with higher expression levels in the inner and outer plexiform layers and the photoreceptor layer. Very weak expression is also present in the kidneys, thymus, and testes.

The protein resides in the membrane. It localises to the cytoplasm. Its subcellular location is the cell cortex. It is found in the cell projection. The protein localises to the axon. It catalyses the reaction L-glutamine(out) = L-glutamine(in). The enzyme catalyses L-alanine(in) = L-alanine(out). The catalysed reaction is L-histidine(out) = L-histidine(in). It carries out the reaction L-aspartate(out) = L-aspartate(in). It catalyses the reaction L-arginine(in) = L-arginine(out). The enzyme catalyses L-leucine(in) = L-leucine(out). Its function is as follows. Electrogenic sodium-dependent amino acid transporter with a preference for L-glutamine, L-alanine, L-histidine, L-aspartate and L-arginine. May facilitate glutamine uptake in both excitatory and inhibitory neurons. The transport mechanism and stoichiometry remain to be elucidated. In Homo sapiens (Human), this protein is Solute carrier family 38 member 8.